The following is a 203-amino-acid chain: DNA-directed RNA polymerase subunit gamma (203 aa).

Zn(2+) contacts are provided by Cys-34, Cys-36, Cys-49, and Cys-52.

Belongs to the RNA polymerase beta' chain family. RpoC1 subfamily. In terms of assembly, in cyanobacteria the RNAP catalytic core is composed of 2 alpha, 1 beta, 1 beta', 1 gamma and 1 omega subunit. When a sigma factor is associated with the core the holoenzyme is formed, which can initiate transcription. It depends on Zn(2+) as a cofactor.

The catalysed reaction is RNA(n) + a ribonucleoside 5'-triphosphate = RNA(n+1) + diphosphate. In terms of biological role, DNA-dependent RNA polymerase catalyzes the transcription of DNA into RNA using the four ribonucleoside triphosphates as substrates. The polypeptide is DNA-directed RNA polymerase subunit gamma (rpoC1) (Prochloron sp).